A 1488-amino-acid chain; its full sequence is DNA polymerase alpha catalytic subunit (1488 aa).

Disordered stretches follow at residues 1-22, 79-124, and 236-325; these read MSES…GRFA, LRDF…TGKA, and FFSS…ESED. Residues 83 to 93 show a composition bias toward acidic residues; the sequence is FEDEDEYSDGE. Residues 96–103 carry the Nuclear localization signal motif; the sequence is RKDSKKKK. Positions 99–113 are enriched in basic residues; that stretch reads SKKKKGVAPNSKKRP. Serine 239 carries the phosphoserine modification. Residues 242-258 show a composition bias toward basic and acidic residues; that stretch reads IKKEPMPEKTPAKKATE. Residues 260 to 278 are compositionally biased toward acidic residues; the sequence is PFSDNEMDFSCLDDDENQF. Phosphoserine is present on residues serine 262 and serine 269. Positions 286–303 are enriched in polar residues; it reads TEKVSQTKTAAEKTSQSK. Residues 304–325 show a composition bias toward basic and acidic residues; it reads VAEKSAPKKETTGSPKESESED. At threonine 314 the chain carries Phosphothreonine. Serine 317 bears the Phosphoserine mark. The tract at residues 638-758 is contains conserved residues essential for 3' -&gt; 5' exonuclease activities; sequence DSERALLSWF…DLLEMYEKGE (121 aa). 2 DNA-binding regions span residues 675–734 and 1255–1380; these read QIVA…CKQV and PTKF…RKKS. Zn(2+)-binding residues include cysteine 1296, cysteine 1299, cysteine 1324, cysteine 1329, cysteine 1362, cysteine 1367, cysteine 1385, and cysteine 1388. The CysA-type zinc finger occupies 1296 to 1327; sequence CVTCKTEQLMASAYRPGPSNSHIAVLQQCAKS. The short motif at 1362–1388 is the CysB motif element; the sequence is CDHPDCNFNTRTHSLRKKSHRPLCQKC.

This sequence belongs to the DNA polymerase type-B family. In terms of assembly, component of the alpha DNA polymerase complex (also known as the alpha DNA polymerase-primase complex) consisting of four subunits: the catalytic subunit PolA1, the regulatory subunit PolA2, and the primase complex subunits Prim1 and Prim2 respectively. PolA1 associates with the DNA primase complex before association with PolA2. Interacts with Dpit47; the interaction inhibits the activity of the DNA polymerase and occurs only in proliferating cells but not in quiescent cells. In terms of processing, in embryos, a cleaved form of 130 kDa is produced up to cycle 14 and then disappears. Expressed in embryos (at protein level).

It localises to the nucleus. It carries out the reaction DNA(n) + a 2'-deoxyribonucleoside 5'-triphosphate = DNA(n+1) + diphosphate. With respect to regulation, inhibited by N2-(p-n-butylphenyl) deoxyguanosine 5'-triphosphate and N2-(p-n-butylphenyl) deoxyadenosine 5'-triphosphate. DNA synthesis is not inhibited by fungal toxin alpha-amaitin. The 3'-5' exonuclease activity is inhibited by 10mM dGMP. Functionally, catalytic subunit of the DNA polymerase alpha complex (also known as the alpha DNA polymerase-primase complex) which plays an essential role in the initiation of DNA synthesis. During the S phase of the cell cycle, the DNA polymerase alpha complex (composed of a catalytic subunit PolA1, an accessory subunit PolA2 and two primase subunits, the catalytic subunit Prim1 and the regulatory subunit Prim2) is recruited to DNA at the replicative forks. The primase subunit of the polymerase alpha complex initiates DNA synthesis by oligomerising short RNA primers on both leading and lagging strands. These primers are initially extended by the polymerase alpha catalytic subunit and subsequently transferred to polymerase delta and polymerase epsilon for processive synthesis on the lagging and leading strand, respectively. In addition to polymerase activity, exhibits 3' to 5' exonuclease activity. In Drosophila melanogaster (Fruit fly), this protein is DNA polymerase alpha catalytic subunit.